The chain runs to 150 residues: UPF0178 protein Sbal223_2514 (150 aa).

Belongs to the UPF0178 family.

This Shewanella baltica (strain OS223) protein is UPF0178 protein Sbal223_2514.